Reading from the N-terminus, the 246-residue chain is U11/U12 small nuclear ribonucleoprotein 35 kDa protein (246 aa).

The RRM domain maps to 51–129; it reads LTLFVARLNL…HEIFVDYELE (79 aa). Lys-172 participates in a covalent cross-link: Glycyl lysine isopeptide (Lys-Gly) (interchain with G-Cter in SUMO2). The tract at residues 187–217 is disordered; that stretch reads SRSRERHWDSRTRDRDHDRGREKRWQEREPT. Positions 192–217 are enriched in basic and acidic residues; it reads RHWDSRTRDRDHDRGREKRWQEREPT.

In terms of assembly, component of the U11/U12 snRNPs that are part of the U12-type spliceosome. In terms of tissue distribution, expressed in heart, liver, skeletal muscle and pancreas.

Its subcellular location is the nucleus. The sequence is that of U11/U12 small nuclear ribonucleoprotein 35 kDa protein (SNRNP35) from Homo sapiens (Human).